The sequence spans 430 residues: MAAAVRAAGFLPALCGASAGRLWSRQLYLNTFPTASIWALKAVPSNGPSSSAGARGRCRSTHLGPALQTQCCTPAPGNVTAQQYRSYSFFTKLTADELWKGALAETGAGARKGRGKRTKRKRRKDLNRGQIIGEGRRGFLWPGLNAPLMKSGAIQTITQRSKEEQEKVEADMVQQREEWDRKRKMKVKRERGWSGNSWGGISLGPPDPGPNGETYDDFDTRILEVRNVFNMTAKEGRKRSVRVLVAVGNGRGAAGFAIGKATERADAFRKAKNRAVHYLHYIERYEDHTIYHDISLTFKRTHIKMKKQPRGYGLRCHRAITTICRLIGIKDMYAKVSGSVNMLSLTRGLFQGLSRQETHQQLADKKSLHVVEFREECGPLPIVVASPQGALRKDPEPEDEVPDIKLDWDDVKAVQGMKRSVWSGLKRAAT.

Positions 108 to 128 are disordered; that stretch reads AGARKGRGKRTKRKRRKDLNR. Residues 111 to 125 show a composition bias toward basic residues; it reads RKGRGKRTKRKRRKD. In terms of domain architecture, S5 DRBM spans 218–282; it reads FDTRILEVRN…NRAVHYLHYI (65 aa).

This sequence belongs to the universal ribosomal protein uS5 family. As to quaternary structure, component of the mitochondrial ribosome small subunit (28S) which comprises a 12S rRNA and about 30 distinct proteins.

It is found in the mitochondrion. The polypeptide is Small ribosomal subunit protein uS5m (MRPS5) (Bos taurus (Bovine)).